The primary structure comprises 178 residues: Cell division protein SepF (178 aa).

A compositionally biased stretch (basic and acidic residues) spans Glu-19 to Ala-45. The tract at residues Glu-19–Glu-65 is disordered.

Belongs to the SepF family. In terms of assembly, homodimer. Interacts with FtsZ.

It is found in the cytoplasm. Its function is as follows. Cell division protein that is part of the divisome complex and is recruited early to the Z-ring. Probably stimulates Z-ring formation, perhaps through the cross-linking of FtsZ protofilaments. Its function overlaps with FtsA. The protein is Cell division protein SepF of Arthrobacter sp. (strain FB24).